The chain runs to 270 residues: ATP synthase subunit a (270 aa).

6 helical membrane-spanning segments follow: residues phenylalanine 27 to leucine 47, isoleucine 90 to isoleucine 110, valine 147 to valine 166, proline 182 to alanine 202, leucine 211 to valine 231, and phenylalanine 238 to leucine 258.

Belongs to the ATPase A chain family. F-type ATPases have 2 components, CF(1) - the catalytic core - and CF(0) - the membrane proton channel. CF(1) has five subunits: alpha(3), beta(3), gamma(1), delta(1), epsilon(1). CF(0) has three main subunits: a(1), b(2) and c(9-12). The alpha and beta chains form an alternating ring which encloses part of the gamma chain. CF(1) is attached to CF(0) by a central stalk formed by the gamma and epsilon chains, while a peripheral stalk is formed by the delta and b chains.

The protein localises to the cell inner membrane. In terms of biological role, key component of the proton channel; it plays a direct role in the translocation of protons across the membrane. The chain is ATP synthase subunit a from Pseudoalteromonas atlantica (strain T6c / ATCC BAA-1087).